A 359-amino-acid chain; its full sequence is ATP-dependent kinase YFH7 (359 aa).

Residue 31–39 participates in ATP binding; that stretch reads GPPGSGKST.

The protein belongs to the YFH7 family.

In terms of biological role, ATP-dependent kinase that could be involved in endoplasmic reticulum membrane assembly. This chain is ATP-dependent kinase YFH7 (YFH7), found in Vanderwaltozyma polyspora (strain ATCC 22028 / DSM 70294 / BCRC 21397 / CBS 2163 / NBRC 10782 / NRRL Y-8283 / UCD 57-17) (Kluyveromyces polysporus).